The primary structure comprises 144 residues: Large ribosomal subunit protein uL11 (144 aa).

This sequence belongs to the universal ribosomal protein uL11 family. Part of the ribosomal stalk of the 50S ribosomal subunit. Interacts with L10 and the large rRNA to form the base of the stalk. L10 forms an elongated spine to which L12 dimers bind in a sequential fashion forming a multimeric L10(L12)X complex. One or more lysine residues are methylated.

Forms part of the ribosomal stalk which helps the ribosome interact with GTP-bound translation factors. In Streptomyces sp. (strain FRI-5), this protein is Large ribosomal subunit protein uL11.